The sequence spans 388 residues: Deoxyuridine 5'-triphosphate nucleotidohydrolase (388 aa).

Positions 77-88 (EEKYDKEQHPGE) are enriched in basic and acidic residues. 2 disordered regions span residues 77 to 96 (EEKY…SPLP) and 336 to 388 (THTP…PRHP). Over residues 351-363 (VDDDVDETEEDEK) the composition is skewed to acidic residues.

This sequence belongs to the dUTPase family. The cofactor is Mg(2+).

The protein localises to the virion. It catalyses the reaction dUTP + H2O = dUMP + diphosphate + H(+). Its pathway is pyrimidine metabolism; dUMP biosynthesis; dUMP from dCTP (dUTP route): step 2/2. Involved in nucleotide metabolism: produces dUMP, the immediate precursor of thymidine nucleotides and decreases the intracellular concentration of dUTP to avoid uracil incorporation into viral DNA. The sequence is that of Deoxyuridine 5'-triphosphate nucleotidohydrolase from Human cytomegalovirus (strain AD169) (HHV-5).